Reading from the N-terminus, the 154-residue chain is Mating pheromone 2 (154 aa).

The signal sequence occupies residues 1 to 16; that stretch reads MKAIFIILAILMVTQA. Positions 17-52 are excised as a propeptide; it reads FKMTSKVNTKLQSQIQSKFQSKNKLASTFQTSSQLK.

Its subcellular location is the secreted. Functionally, mating ciliate pheromones (or gamones) are diffusible extracellular communication signals that distinguish different intraspecific classes of cells commonly referred to as 'mating types'. They prepare the latter for conjugation by changing their cell surface properties. This is Mating pheromone 2 from Euplotoides octocarinatus (Freshwater ciliate).